The chain runs to 369 residues: Anhydro-N-acetylmuramic acid kinase (369 aa).

12-19 (GTSLDGVD) provides a ligand contact to ATP.

The protein belongs to the anhydro-N-acetylmuramic acid kinase family.

The enzyme catalyses 1,6-anhydro-N-acetyl-beta-muramate + ATP + H2O = N-acetyl-D-muramate 6-phosphate + ADP + H(+). The protein operates within amino-sugar metabolism; 1,6-anhydro-N-acetylmuramate degradation. It functions in the pathway cell wall biogenesis; peptidoglycan recycling. In terms of biological role, catalyzes the specific phosphorylation of 1,6-anhydro-N-acetylmuramic acid (anhMurNAc) with the simultaneous cleavage of the 1,6-anhydro ring, generating MurNAc-6-P. Is required for the utilization of anhMurNAc either imported from the medium or derived from its own cell wall murein, and thus plays a role in cell wall recycling. This is Anhydro-N-acetylmuramic acid kinase from Actinobacillus pleuropneumoniae serotype 3 (strain JL03).